Consider the following 405-residue polypeptide: Argininosuccinate synthase (405 aa).

Residue Ala-12–Ser-20 coordinates ATP. 2 residues coordinate L-citrulline: Tyr-90 and Ser-95. Gly-120 provides a ligand contact to ATP. L-aspartate-binding residues include Thr-122, Asn-126, and Asp-127. Asn-126 is a binding site for L-citrulline. L-citrulline contacts are provided by Arg-130, Ser-179, Ser-188, Glu-265, and Tyr-277.

This sequence belongs to the argininosuccinate synthase family. Type 1 subfamily. Homotetramer.

Its subcellular location is the cytoplasm. It carries out the reaction L-citrulline + L-aspartate + ATP = 2-(N(omega)-L-arginino)succinate + AMP + diphosphate + H(+). It participates in amino-acid biosynthesis; L-arginine biosynthesis; L-arginine from L-ornithine and carbamoyl phosphate: step 2/3. The chain is Argininosuccinate synthase from Clostridium perfringens (strain 13 / Type A).